The following is a 284-amino-acid chain: MGMGTSTFVIRWVNLLTMLLAVAVIIFGVWMSTHNDGCRRSLTFPVIALGGFIFLISIIGFLGACKRSVALLWIYLAVLLIVLIAILVFTVLAFIVTNNGSGHTNPGLRYKEYKLNDYSSWFLKQLNNTSNWIRLKSCLVKSEQCRKLSKKYKTIKQLKSAELTPIEAGCCRPPSECGYPAVNASYYDLSFHSISSNKDCKLYKNLRTIKCYNCDSCKAGVAQYMKTEWRLVAIFNVVLFVVLISSLLSTRFDSEQSFGLLNGLVQISNITFKDCQTTTVPKQF.

Residues 1–11 (MGMGTSTFVIR) lie on the Cytoplasmic side of the membrane. Residues 12–32 (WVNLLTMLLAVAVIIFGVWMS) traverse the membrane as a helical segment. Over 33–43 (THNDGCRRSLT) the chain is Extracellular. The chain crosses the membrane as a helical span at residues 44 to 64 (FPVIALGGFIFLISIIGFLGA). Residues 65-75 (CKRSVALLWIY) lie on the Cytoplasmic side of the membrane. The chain crosses the membrane as a helical span at residues 76-96 (LAVLLIVLIAILVFTVLAFIV). Over 97-228 (TNNGSGHTNP…AGVAQYMKTE (132 aa)) the chain is Extracellular. N-linked (GlcNAc...) asparagine glycans are attached at residues Asn-99, Asn-128, and Asn-183. A helical membrane pass occupies residues 229-249 (WRLVAIFNVVLFVVLISSLLS). Residues 250-284 (TRFDSEQSFGLLNGLVQISNITFKDCQTTTVPKQF) lie on the Cytoplasmic side of the membrane.

The protein belongs to the tetraspanin (TM4SF) family.

It is found in the membrane. May be involved in the regulation of cell differentiation. This Arabidopsis thaliana (Mouse-ear cress) protein is Tetraspanin-10 (TET10).